The primary structure comprises 117 residues: UPF0342 protein OB1136 (117 aa).

Belongs to the UPF0342 family.

This is UPF0342 protein OB1136 from Oceanobacillus iheyensis (strain DSM 14371 / CIP 107618 / JCM 11309 / KCTC 3954 / HTE831).